The following is a 357-amino-acid chain: MTETVVVGISGGVDSAVAACLLMKQGYRVLGLNIRILDTPDEHPSLAPSPLLISDHADYQFPVFSLNLSARFSQEVIRYFQADYLAGKTPNPCMVCNKKIKWHGLLEGARLLGAERIATGHYARTASLDGRVRLYKGLDPQKDQSYFLWMLSQNDLNKTCFPLGELAKEKVRELARTFGVRAAEKKESQEICFVPHDDYCRYLELAVPGLKEKVAGGDIVDENGKVLGKHRGYPFYTIGQRRGLGLSSTEPLYVTALDQENNCVHTGNKSSLDTRSLTVSGLNWINNKSLDEPVEAFGKIRYRDRETPCTIAPLPDGQATITFHTAKHAVAPGQAAVFYHDEEVLGGGFISAVNRDR.

Residues 8–15 (GISGGVDS) and Ile34 each bind ATP. Residue Cys96 is the Nucleophile of the active site. A disulfide bridge links Cys96 with Cys192. An ATP-binding site is contributed by Gly120. Residues 142-144 (KDQ) are interaction with tRNA. Cys192 functions as the Cysteine persulfide intermediate in the catalytic mechanism. The interval 301 to 302 (RY) is interaction with tRNA.

Belongs to the MnmA/TRMU family.

It is found in the cytoplasm. It catalyses the reaction S-sulfanyl-L-cysteinyl-[protein] + uridine(34) in tRNA + AH2 + ATP = 2-thiouridine(34) in tRNA + L-cysteinyl-[protein] + A + AMP + diphosphate + H(+). Functionally, catalyzes the 2-thiolation of uridine at the wobble position (U34) of tRNA, leading to the formation of s(2)U34. In Chlorobium phaeobacteroides (strain DSM 266 / SMG 266 / 2430), this protein is tRNA-specific 2-thiouridylase MnmA.